We begin with the raw amino-acid sequence, 68 residues long: Large ribosomal subunit protein uL29 (68 aa).

Belongs to the universal ribosomal protein uL29 family.

The protein is Large ribosomal subunit protein uL29 of Streptococcus agalactiae serotype Ia (strain ATCC 27591 / A909 / CDC SS700).